The primary structure comprises 674 residues: 1,4-alpha-glucan branching enzyme GlgB 1 (674 aa).

Asp336 functions as the Nucleophile in the catalytic mechanism. Glu389 (proton donor) is an active-site residue.

Belongs to the glycosyl hydrolase 13 family. GlgB subfamily. Monomer.

It carries out the reaction Transfers a segment of a (1-&gt;4)-alpha-D-glucan chain to a primary hydroxy group in a similar glucan chain.. The protein operates within glycan biosynthesis; glycogen biosynthesis. Catalyzes the formation of the alpha-1,6-glucosidic linkages in glycogen by scission of a 1,4-alpha-linked oligosaccharide from growing alpha-1,4-glucan chains and the subsequent attachment of the oligosaccharide to the alpha-1,6 position. This chain is 1,4-alpha-glucan branching enzyme GlgB 1 (glgB1), found in Clostridium perfringens (strain 13 / Type A).